A 246-amino-acid chain; its full sequence is 2-deoxyglucose-6-phosphate phosphatase 1 (246 aa).

Asp-83 functions as the Nucleophile in the catalytic mechanism. Residue Asp-83 participates in Mg(2+) binding. Residues Asp-83, Glu-92, and 146–149 each bind substrate; that span reads DVKN. Asp-183 lines the Mg(2+) pocket.

It belongs to the HAD-like hydrolase superfamily. DOG/GPP family. Requires Mg(2+) as cofactor.

The catalysed reaction is 2-deoxy-D-glucose 6-phosphate + H2O = 2-deoxy-D-glucose + phosphate. In terms of biological role, phosphatase that is active on 2-deoxy-D-glucose 6-phosphate (2-DOG-6P), as well as on fructose-1-P. The sequence is that of 2-deoxyglucose-6-phosphate phosphatase 1 from Saccharomyces cerevisiae (strain ATCC 204508 / S288c) (Baker's yeast).